A 596-amino-acid polypeptide reads, in one-letter code: Probable tripeptidyl-peptidase SED2 (596 aa).

The signal sequence occupies residues 1–16 (MRLLKFVCLLASVAAA). Positions 17-203 (KPTPGASHKV…LESMSVEEFA (187 aa)) are cleaved as a propeptide — removed in mature form. The Peptidase S53 domain maps to 210–596 (LVTTACLREL…NFQALTKVLP (387 aa)). Asn265 carries N-linked (GlcNAc...) asparagine glycosylation. Catalysis depends on charge relay system residues Glu286 and Asp290. N-linked (GlcNAc...) asparagine glycosylation is present at Asn403. Ser501 functions as the Charge relay system in the catalytic mechanism. Ca(2+) is bound by residues Asp543 and Ile544. Asn572 carries N-linked (GlcNAc...) asparagine glycosylation. The Ca(2+) site is built by Gly576 and Asp578.

It depends on Ca(2+) as a cofactor.

The protein localises to the secreted. Its subcellular location is the extracellular space. It catalyses the reaction Release of an N-terminal tripeptide from a polypeptide.. In terms of biological role, secreted tripeptidyl-peptidase which degrades proteins at acidic pHs and is involved in virulence. The sequence is that of Probable tripeptidyl-peptidase SED2 (SED2) from Arthroderma benhamiae (strain ATCC MYA-4681 / CBS 112371) (Trichophyton mentagrophytes).